Consider the following 196-residue polypeptide: Transcription repressor OFP10 (196 aa).

An OVATE domain is found at 100-159 (MAKESINPFEDYKKSMNQMIEERYIETESELKELLRCFLDINPSPQHNLIVRAFVDVCSH).

In terms of tissue distribution, expressed in roots, cauline leaves, shoots, stems, flower buds and siliques.

It is found in the nucleus. Functionally, transcriptional repressor that may regulate multiple aspects of plant growth and development through the regulation of BEL1-LIKE (BLH) and KNOX TALE (KNAT) homeodomain transcription factors. This Arabidopsis thaliana (Mouse-ear cress) protein is Transcription repressor OFP10 (OFP10).